A 179-amino-acid polypeptide reads, in one-letter code: Large ribosomal subunit protein uL6 (179 aa).

It belongs to the universal ribosomal protein uL6 family. In terms of assembly, part of the 50S ribosomal subunit.

Its function is as follows. This protein binds to the 23S rRNA, and is important in its secondary structure. It is located near the subunit interface in the base of the L7/L12 stalk, and near the tRNA binding site of the peptidyltransferase center. In Mycobacterium ulcerans (strain Agy99), this protein is Large ribosomal subunit protein uL6.